A 72-amino-acid chain; its full sequence is Metallothionein-like protein type 2 (72 aa).

This sequence belongs to the metallothionein superfamily. Type 15 family.

Its function is as follows. Metallothioneins have a high content of cysteine residues that bind various heavy metals. This chain is Metallothionein-like protein type 2, found in Solanum lycopersicum (Tomato).